The chain runs to 341 residues: tRNA N6-adenosine threonylcarbamoyltransferase (341 aa).

The Fe cation site is built by H115 and H119. Substrate contacts are provided by residues 138-142 (VVSGG), D171, G184, D188, and N279. Residue D307 participates in Fe cation binding.

It belongs to the KAE1 / TsaD family. The cofactor is Fe(2+).

Its subcellular location is the cytoplasm. The enzyme catalyses L-threonylcarbamoyladenylate + adenosine(37) in tRNA = N(6)-L-threonylcarbamoyladenosine(37) in tRNA + AMP + H(+). Required for the formation of a threonylcarbamoyl group on adenosine at position 37 (t(6)A37) in tRNAs that read codons beginning with adenine. Is involved in the transfer of the threonylcarbamoyl moiety of threonylcarbamoyl-AMP (TC-AMP) to the N6 group of A37, together with TsaE and TsaB. TsaD likely plays a direct catalytic role in this reaction. The chain is tRNA N6-adenosine threonylcarbamoyltransferase from Clostridium kluyveri (strain NBRC 12016).